Reading from the N-terminus, the 610-residue chain is Transducer of Cdc42-dependent actin assembly protein 2 homolog (610 aa).

One can recognise an F-BAR domain in the interval 1-267; it reads MIPVSRFFTV…EVGKIDAEGD (267 aa). Residues 283–315 are disordered; the sequence is APFEIEDLGDPKNCDSRTNDSADGSGGKLLKSS. Over residues 291 to 302 the composition is skewed to basic and acidic residues; the sequence is GDPKNCDSRTND. The region spanning 352 to 429 is the REM-1 domain; it reads SKPAHVRLSC…IHNLKEFYAM (78 aa). The stretch at 355-385 forms a coiled coil; it reads AHVRLSCLRSKIRDMEKQLEQAIQGREGITR. Disordered stretches follow at residues 436–487 and 499–519; these read EGQE…SSKN and LISS…RRAE. Over residues 437–449 the composition is skewed to basic and acidic residues; that stretch reads GQERSFGGRDTPD. Residues 453-464 show a composition bias toward low complexity; sequence SMSGSSTNQSSS. A compositionally biased stretch (polar residues) spans 475–487; it reads AGNSSSADDSSKN. The span at 501–513 shows a compositional bias: low complexity; it reads SSPKTSKSSTPTP. The region spanning 547 to 610 is the SH3 domain; that stretch reads ETAVTVTALF…VPTSYLQFPQ (64 aa).

It belongs to the FNBP1 family. As to quaternary structure, interacts (via SH3 domain) with wsp-1 and abi-1. Interacts with cdc-42 and (via SH3 domain) with wve-1.

The protein resides in the cell junction. Its subcellular location is the cell membrane. The protein localises to the cytoplasmic vesicle. It is found in the cytoplasm. It localises to the recycling endosome. In terms of biological role, plays a role in protein trafficking, actin organization and embryonic morphogenesis. Potentially acts as a cdc-42 effector. May play a role in egg laying. Together with toca-1, is required for protein trafficking regulating yolk protein clathrin-mediated endocytosis by oocytes during oogenesis and retrograde recycling and the sorting of recycling endosome cargo proteins such as mig-14. Also, together with toca-2, controls the distribution of actin at cell junctions. In Caenorhabditis elegans, this protein is Transducer of Cdc42-dependent actin assembly protein 2 homolog.